The following is a 397-amino-acid chain: Tyrosine--tRNA ligase (397 aa).

The short motif at P41–H50 is the 'HIGH' region element. Residues K225–S229 carry the 'KMSKS' region motif. K228 provides a ligand contact to ATP. The 57-residue stretch at A340 to V396 folds into the S4 RNA-binding domain.

Belongs to the class-I aminoacyl-tRNA synthetase family. TyrS type 2 subfamily. In terms of assembly, homodimer.

The protein resides in the cytoplasm. It catalyses the reaction tRNA(Tyr) + L-tyrosine + ATP = L-tyrosyl-tRNA(Tyr) + AMP + diphosphate + H(+). In terms of biological role, catalyzes the attachment of tyrosine to tRNA(Tyr) in a two-step reaction: tyrosine is first activated by ATP to form Tyr-AMP and then transferred to the acceptor end of tRNA(Tyr). This chain is Tyrosine--tRNA ligase, found in Oleidesulfovibrio alaskensis (strain ATCC BAA-1058 / DSM 17464 / G20) (Desulfovibrio alaskensis).